The sequence spans 326 residues: Malate dehydrogenase (326 aa).

Position 12–18 (G12–A18) interacts with NAD(+). R93 and R99 together coordinate substrate. Residues N106, Q113, and V130–N132 each bind NAD(+). Substrate contacts are provided by N132 and R163. Residue H188 is the Proton acceptor of the active site.

This sequence belongs to the LDH/MDH superfamily. MDH type 2 family.

The enzyme catalyses (S)-malate + NAD(+) = oxaloacetate + NADH + H(+). In terms of biological role, catalyzes the reversible oxidation of malate to oxaloacetate. The polypeptide is Malate dehydrogenase (Chlamydia trachomatis serovar A (strain ATCC VR-571B / DSM 19440 / HAR-13)).